The chain runs to 124 residues: MHIIKTLISVGVAFSLSACLSLEGVEIAGLEGKSSGTLTKYRCENGYKASIKQRDNGVVSIAFNDGKDSYVSYLNHVPSASGTLYVNDKNTLKWHQKNNIAVFTYPDRNYAKTGQLVTTNCHKY.

An N-terminal signal peptide occupies residues 1 to 18 (MHIIKTLISVGVAFSLSA). Cys19 carries the N-palmitoyl cysteine lipid modification. Cys19 carries S-diacylglycerol cysteine lipidation.

The protein resides in the cell membrane. This is an uncharacterized protein from Pasteurella multocida (strain Pm70).